The following is a 1388-amino-acid chain: DNA-directed RNA polymerase subunit beta' (1388 aa).

Zn(2+) is bound by residues Cys65, Cys67, Cys80, and Cys83. Residues Asp456, Asp458, and Asp460 each coordinate Mg(2+). The Zn(2+) site is built by Cys812, Cys887, Cys894, and Cys897.

This sequence belongs to the RNA polymerase beta' chain family. The RNAP catalytic core consists of 2 alpha, 1 beta, 1 beta' and 1 omega subunit. When a sigma factor is associated with the core the holoenzyme is formed, which can initiate transcription. Requires Mg(2+) as cofactor. Zn(2+) is required as a cofactor.

The catalysed reaction is RNA(n) + a ribonucleoside 5'-triphosphate = RNA(n+1) + diphosphate. Functionally, DNA-dependent RNA polymerase catalyzes the transcription of DNA into RNA using the four ribonucleoside triphosphates as substrates. The chain is DNA-directed RNA polymerase subunit beta' from Protochlamydia amoebophila (strain UWE25).